The chain runs to 406 residues: D-alanyl-D-alanine carboxypeptidase (406 aa).

The signal sequence occupies residues 1–31 (MVSGTVGRGTALGAVLLALLAVPAQAGTAAA). Catalysis depends on Ser93, which acts as the Acyl-ester intermediate. Substrate is bound by residues 151-154 (FAQT), 190-192 (YSN), Arg316, 330-332 (TGT), and 357-358 (SN). Residues 381–406 (AKLRSATSSATTVERHEDIAPGIARD) constitute a propeptide that is removed on maturation. The interval 387-406 (TSSATTVERHEDIAPGIARD) is disordered. Basic and acidic residues predominate over residues 393 to 406 (VERHEDIAPGIARD).

Belongs to the peptidase S12 family.

The protein localises to the secreted. The enzyme catalyses Preferential cleavage: (Ac)2-L-Lys-D-Ala-|-D-Ala. Also transpeptidation of peptidyl-alanyl moieties that are N-acyl substituents of D-alanine.. It participates in cell wall biogenesis; peptidoglycan biosynthesis. Its function is as follows. Catalyzes distinct carboxypeptidation and transpeptidation reactions during the last stages of wall peptidoglycan synthesis. Mistaking a beta-lactam antibiotic molecule for a normal substrate (i.e. a D-alanyl-D-alanine-terminated peptide), it becomes immobilized in the form of a long-lived, serine-ester-linked acyl enzyme and thus behave as penicillin-binding protein (PBP). The sequence is that of D-alanyl-D-alanine carboxypeptidase from Streptomyces sp. (strain R61).